The chain runs to 89 residues: Small ribosomal subunit protein uS17 (89 aa).

It belongs to the universal ribosomal protein uS17 family. Part of the 30S ribosomal subunit.

Functionally, one of the primary rRNA binding proteins, it binds specifically to the 5'-end of 16S ribosomal RNA. The chain is Small ribosomal subunit protein uS17 from Xanthomonas campestris pv. campestris (strain 8004).